The primary structure comprises 255 residues: Tabinhibitin 7 (255 aa).

The N-terminal stretch at Met-1–Ala-23 is a signal peptide. Residues Arg-32–Asp-34 carry the Cell attachment site motif. The SCP domain occupies Leu-67–Phe-211.

This sequence belongs to the CRISP family. In terms of tissue distribution, expressed in salivary glands.

The protein localises to the secreted. Its function is as follows. Inhibits platelet aggregation induced by all agonists tested (ADP, arachidonic acid, the thromboxane A2 analog U46619, thrombin, and snake venom snaclecs (TMVA that activates platelet through GPIB, and stejnulxin that specifically acts through GPVI (GP6))). May act by competing with fibrinogen for binding to glycoprotein IIb/IIIa (ITGA2B/ITGB3). The chain is Tabinhibitin 7 from Tabanus yao (Horsefly).